The primary structure comprises 287 residues: Glucose uptake protein GlcU (287 aa).

8 consecutive transmembrane segments (helical) span residues L4–G26, A38–V60, W110–L132, I153–V175, A180–Y197, I210–Q227, V232–L254, and R261–A283.

Belongs to the GRP transporter (TC 2.A.7.5) family.

It localises to the cell membrane. Involved in the uptake of glucose. In Bacillus subtilis (strain 168), this protein is Glucose uptake protein GlcU (glcU).